The sequence spans 69 residues: Large ribosomal subunit protein bL28 (69 aa).

The protein belongs to the bacterial ribosomal protein bL28 family.

The polypeptide is Large ribosomal subunit protein bL28 (Nitratidesulfovibrio vulgaris (strain ATCC 29579 / DSM 644 / CCUG 34227 / NCIMB 8303 / VKM B-1760 / Hildenborough) (Desulfovibrio vulgaris)).